The sequence spans 560 residues: Membrane protein insertase YidC (560 aa).

6 helical membrane-spanning segments follow: residues 5-25 (IINL…WQYF), 334-354 (AIDF…MNFF), 357-377 (YVGN…LLMF), 431-451 (LPIL…YVTI), 476-496 (LFGL…WPIL), and 522-542 (FMPL…LIYW).

It belongs to the OXA1/ALB3/YidC family. Type 1 subfamily. Interacts with the Sec translocase complex via SecD. Specifically interacts with transmembrane segments of nascent integral membrane proteins during membrane integration.

The protein resides in the cell inner membrane. Functionally, required for the insertion and/or proper folding and/or complex formation of integral membrane proteins into the membrane. Involved in integration of membrane proteins that insert both dependently and independently of the Sec translocase complex, as well as at least some lipoproteins. Aids folding of multispanning membrane proteins. This chain is Membrane protein insertase YidC, found in Rickettsia africae (strain ESF-5).